The sequence spans 60 residues: Short neurotoxin 1 (60 aa).

4 disulfide bridges follow: Cys-3–Cys-22, Cys-17–Cys-39, Cys-41–Cys-52, and Cys-53–Cys-58.

Belongs to the three-finger toxin family. Short-chain subfamily. Type I alpha-neurotoxin sub-subfamily. As to expression, expressed by the venom gland.

Its subcellular location is the secreted. Functionally, binds to muscle nicotinic acetylcholine receptor (nAChR) and inhibit acetylcholine from binding to the receptor, thereby impairing neuromuscular transmission. The protein is Short neurotoxin 1 of Hydrophis cyanocinctus (Asian annulated sea snake).